The primary structure comprises 155 residues: RING finger protein 122 (155 aa).

A helical transmembrane segment spans residues 40-60 (VIFGTGIFVFMLSLIFCCYFI). The RING-type; atypical zinc-finger motif lies at 93-134 (CAVCLEDFKGKDELGVLPCQHAFHRKCLVKWLEVRCVCPMCN).

The protein resides in the golgi apparatus. Its subcellular location is the endoplasmic reticulum. It localises to the membrane. Its function is as follows. May induce necrosis and apoptosis. May play a role in cell viability. The polypeptide is RING finger protein 122 (Rnf122) (Mus musculus (Mouse)).